Consider the following 225-residue polypeptide: Cytidylate kinase (225 aa).

Position 11-19 (11-19) interacts with ATP; sequence GPAAAGKST.

The protein belongs to the cytidylate kinase family. Type 1 subfamily.

Its subcellular location is the cytoplasm. It catalyses the reaction CMP + ATP = CDP + ADP. The catalysed reaction is dCMP + ATP = dCDP + ADP. This is Cytidylate kinase from Bacillus anthracis (strain A0248).